The chain runs to 714 residues: Elongation factor G-like protein (714 aa).

The tr-type G domain maps to 21 to 289; the sequence is GGVRNVVLVG…VATRGFPSPM (269 aa). The segment at 30-37 is G1; it reads GPSGGGKT. Residue 30–37 coordinates GTP; that stretch reads GPSGGGKT. The segment at 73–77 is G2; sequence QRSVG. The segment at 94–97 is G3; it reads DTPG. GTP is bound by residues 94-98 and 148-151; these read DTPGY and TKLD. Residues 148 to 151 are G4; the sequence is TKLD. The interval 267–269 is G5; that stretch reads CSS.

This sequence belongs to the TRAFAC class translation factor GTPase superfamily. Classic translation factor GTPase family. EF-G/EF-2 subfamily.

The chain is Elongation factor G-like protein from Mycobacterium tuberculosis (strain CDC 1551 / Oshkosh).